The primary structure comprises 25 residues: Small ribosomal subunit protein uS19 (25 aa).

A disordered region spans residues 1–25 (GHKLGEFAPTRTFRGHKKEDKKVKR).

The protein belongs to the universal ribosomal protein uS19 family.

In terms of biological role, protein S19 forms a complex with S13 that binds strongly to the 16S ribosomal RNA. This is Small ribosomal subunit protein uS19 (rpsS) from Acholeplasma laidlawii.